A 425-amino-acid polypeptide reads, in one-letter code: Histidine--tRNA ligase (425 aa).

The protein belongs to the class-II aminoacyl-tRNA synthetase family. As to quaternary structure, homodimer.

The protein localises to the cytoplasm. It carries out the reaction tRNA(His) + L-histidine + ATP = L-histidyl-tRNA(His) + AMP + diphosphate + H(+). The polypeptide is Histidine--tRNA ligase (Shewanella sp. (strain ANA-3)).